A 110-amino-acid chain; its full sequence is UPF0145 protein (110 aa).

Belongs to the UPF0145 family.

The polypeptide is UPF0145 protein (Listeria welshimeri).